We begin with the raw amino-acid sequence, 325 residues long: Natural cytotoxicity triggering receptor 1 (325 aa).

A signal peptide spans 1–16; the sequence is MLPTLTALLCLGLCLS. Residues 17–258 lie on the Extracellular side of the membrane; the sequence is QRINTEKQTL…WDHTAQNLIR (242 aa). 2 consecutive Ig-like domains span residues 42 to 100 and 137 to 192; these read GNSV…TCFY and GENV…RCFG. The cysteines at positions 49 and 98 are disulfide-linked. A glycan (N-linked (GlcNAc...) asparagine) is linked at asparagine 139. Cysteine 144 and cysteine 190 are disulfide-bonded. N-linked (GlcNAc...) asparagine glycosylation occurs at asparagine 216. The helical transmembrane segment at 259 to 279 threads the bilayer; sequence IGLACIIVMALVWLLAEDWLS. At 280–325 the chain is on the cytoplasmic side; the sequence is RRKDHEKLNRLTSWECRGRRRMHRYHEEEQRDAISMRELKATPGDM.

It belongs to the natural cytotoxicity receptor (NCR) family. Interacts with CD3Z and FCER1G. Weakly expressed in spleen, heart and lung.

The protein localises to the cell membrane. Cytotoxicity-activating receptor that may contribute to the increased efficiency of activated natural killer (NK) cells to mediate tumor cell lysis. In Rattus norvegicus (Rat), this protein is Natural cytotoxicity triggering receptor 1 (Ncr1).